The sequence spans 133 residues: Small ribosomal subunit protein uS8 (133 aa).

This sequence belongs to the universal ribosomal protein uS8 family. In terms of assembly, part of the 30S ribosomal subunit. Contacts proteins S5 and S12.

In terms of biological role, one of the primary rRNA binding proteins, it binds directly to 16S rRNA central domain where it helps coordinate assembly of the platform of the 30S subunit. This chain is Small ribosomal subunit protein uS8, found in Orientia tsutsugamushi (strain Ikeda) (Rickettsia tsutsugamushi).